Reading from the N-terminus, the 243-residue chain is uncharacterized protein (243 aa).

Residues 1–16 (MKHFIILFLLLFVTAG) form the signal peptide. Cys-17 is lipidated: N-palmitoyl cysteine. The S-diacylglycerol cysteine moiety is linked to residue Cys-17.

The protein localises to the cell membrane. This is an uncharacterized protein from Bacillus subtilis (strain 168).